The sequence spans 408 residues: MNTTDNGVNCLCAICGDRATGKHYGASSCDGCKGFFRRSIRKSHVYSCRFSRQCVVDKDKRNQCRYCRLRKCFRAGMKKEAVQNERDRISTRRSTFDGSNIPSINTLAQAEVRSRQISVSSPGSSTDINVKKIASIGDVCESMKQQLLVLVEWAKYIPAFCELPLDDQVALLRAHAGEHLLLGATKRSMMYKDILLLGNNYVIHRNSCEVEISRVANRVLDELVRPFQEIQIDDNEYACLKAIVFFDPDAKGLSDPVKIKNMRFQVQIGLEDYINDRQYDSRGRFGELLLLLPTLQSITWQMIEQIQFVKLFGMVKIDNLLQEMLLGGASNDGSHLHHPMHPHLSQDPLTGQTILLGPMSTLVHADQISTPETPLPSPPQGSGQEQYKIAANQASVISHQHLSKQKQL.

A DNA-binding region (nuclear receptor) is located at residues 9–84 (NCLCAICGDR…AGMKKEAVQN (76 aa)). 2 NR C4-type zinc fingers span residues 12–32 (CAIC…CDGC) and 48–72 (CRFS…LRKC). Serine 94 is subject to Phosphoserine. The NR LBD domain maps to 99-328 (SNIPSINTLA…NLLQEMLLGG (230 aa)). The segment at 368-390 (ISTPETPLPSPPQGSGQEQYKIA) is disordered. Phosphothreonine is present on residues threonine 370 and threonine 373. Residue serine 377 is modified to Phosphoserine.

The protein belongs to the nuclear hormone receptor family. NR2 subfamily. Expressed in pancreas, kidney, small intestine and testis. Weakly expressed in colon. Not expressed in liver, skeletal muscle, lung, placenta, brain, heart, peripheral blood, ovary, prostate, thymus and spleen.

Its subcellular location is the nucleus. Its function is as follows. Transcription factor. Has a lower transcription activation potential than HNF4-alpha. This is Hepatocyte nuclear factor 4-gamma (HNF4G) from Homo sapiens (Human).